Here is a 492-residue protein sequence, read N- to C-terminus: Glutamyl-tRNA(Gln) amidotransferase subunit B, mitochondrial (492 aa).

The protein belongs to the GatB/GatE family. GatB subfamily. As to quaternary structure, subunit of the heterotrimeric GatFAB amidotransferase (AdT) complex, composed of A, B and F subunits.

The protein resides in the mitochondrion. It carries out the reaction L-glutamyl-tRNA(Gln) + L-glutamine + ATP + H2O = L-glutaminyl-tRNA(Gln) + L-glutamate + ADP + phosphate + H(+). In terms of biological role, allows the formation of correctly charged Gln-tRNA(Gln) through the transamidation of misacylated Glu-tRNA(Gln) in the mitochondria. The reaction takes place in the presence of glutamine and ATP through an activated gamma-phospho-Glu-tRNA(Gln). The sequence is that of Glutamyl-tRNA(Gln) amidotransferase subunit B, mitochondrial from Komagataella phaffii (strain GS115 / ATCC 20864) (Yeast).